The following is a 901-amino-acid chain: Viral-enhancing factor (901 aa).

A Peptidase M60 domain is found at 27-330 (HRRTEVGVVL…IFTWLYNPQR (304 aa)). Asn-65, Asn-265, Asn-339, Asn-349, Asn-540, Asn-594, Asn-595, Asn-642, Asn-683, and Asn-698 each carry an N-linked (GlcNAc...) asparagine; by host glycan.

In terms of biological role, involved in disruption of the peritrophic membrane and fusion of nucleocapsids with midgut cells. In Trichoplusia ni (Cabbage looper), this protein is Viral-enhancing factor (VEF).